Here is a 244-residue protein sequence, read N- to C-terminus: Carboxy-S-adenosyl-L-methionine synthase (244 aa).

S-adenosyl-L-methionine contacts are provided by residues tyrosine 41, 66–68 (GCS), 91–92 (DN), 119–120 (DI), asparagine 134, and arginine 201.

Belongs to the class I-like SAM-binding methyltransferase superfamily. Cx-SAM synthase family. In terms of assembly, homodimer.

The enzyme catalyses prephenate + S-adenosyl-L-methionine = carboxy-S-adenosyl-L-methionine + 3-phenylpyruvate + H2O. Functionally, catalyzes the conversion of S-adenosyl-L-methionine (SAM) to carboxy-S-adenosyl-L-methionine (Cx-SAM). In Photobacterium profundum (strain SS9), this protein is Carboxy-S-adenosyl-L-methionine synthase.